The following is a 131-amino-acid chain: Profilin-1 (131 aa).

The protein belongs to the profilin family. Occurs in many kinds of cells as a complex with monomeric actin in a 1:1 ratio. As to expression, expressed at low levels roots, leaves, stems, flowers and siliques. Expressed in leaf epidermal cells, trichomes and stem epidermal cells. Detected in phloem exudates (at protein level).

The protein localises to the cytoplasm. The protein resides in the cytoskeleton. Its function is as follows. Binds to actin monomers and regulates the organization of the actin cytoskeleton. At high concentrations, profilin prevents the polymerization of actin, whereas it enhances it at low concentrations. At low concentrations, associates with the poly-proline motif of formins to enhance actin filament elongation rate. Binds ACT1, ACT7 and ACT11 and inhibits actin polymerization. Coordinates the stochastic dynamic properties of actin filaments by modulating formin-mediated actin nucleation and assembly during axial cell expansion. Binds G-actin and poly-L-proline in vitro. Inhibits cell growth of various pathogenic fungal strains. May play a role as antifungal proteins in the defense system against fungal pathogen attacks. In Arabidopsis thaliana (Mouse-ear cress), this protein is Profilin-1.